A 368-amino-acid chain; its full sequence is UDP-N-acetylenolpyruvoylglucosamine reductase (368 aa).

Residues 32 to 199 enclose the FAD-binding PCMH-type domain; sequence IGGKPRSAVR…LAIELQLLTD (168 aa). Arg-177 is an active-site residue. The Proton donor role is filled by Ser-257. Residue Glu-358 is part of the active site.

This sequence belongs to the MurB family. Requires FAD as cofactor.

It is found in the cytoplasm. It carries out the reaction UDP-N-acetyl-alpha-D-muramate + NADP(+) = UDP-N-acetyl-3-O-(1-carboxyvinyl)-alpha-D-glucosamine + NADPH + H(+). It participates in cell wall biogenesis; peptidoglycan biosynthesis. Cell wall formation. The protein is UDP-N-acetylenolpyruvoylglucosamine reductase of Corynebacterium glutamicum (strain R).